Consider the following 325-residue polypeptide: uncharacterized protein (325 aa).

Residues 1–75 (MSQPPEHPGN…PPPGYPTHLQ (75 aa)) are disordered. Residues 24-70 (YPPPGYGAPPPPPGYGPPPGTYLPPGYNAPPPPPGYGPPPGPPPPGY) are compositionally biased toward pro residues. Helical transmembrane passes span 96–116 (AVTL…VIGA), 153–173 (IVMF…HAGI), 205–225 (LLIV…GLIF), and 273–293 (LVGE…AALI).

This sequence to M.tuberculosis Rv2560.

The protein resides in the cell membrane. This is an uncharacterized protein from Mycobacterium bovis (strain ATCC BAA-935 / AF2122/97).